Here is a 344-residue protein sequence, read N- to C-terminus: tRNA N6-adenosine threonylcarbamoyltransferase (344 aa).

Residues histidine 112 and histidine 116 each coordinate Fe cation. Substrate contacts are provided by residues leucine 134–glycine 138, aspartate 167, glycine 180, and asparagine 280. A Fe cation-binding site is contributed by aspartate 308.

It belongs to the KAE1 / TsaD family. The cofactor is Fe(2+).

It is found in the cytoplasm. The enzyme catalyses L-threonylcarbamoyladenylate + adenosine(37) in tRNA = N(6)-L-threonylcarbamoyladenosine(37) in tRNA + AMP + H(+). Required for the formation of a threonylcarbamoyl group on adenosine at position 37 (t(6)A37) in tRNAs that read codons beginning with adenine. Is involved in the transfer of the threonylcarbamoyl moiety of threonylcarbamoyl-AMP (TC-AMP) to the N6 group of A37, together with TsaE and TsaB. TsaD likely plays a direct catalytic role in this reaction. The sequence is that of tRNA N6-adenosine threonylcarbamoyltransferase from Rickettsia rickettsii (strain Iowa).